Reading from the N-terminus, the 871-residue chain is DNA mismatch repair protein MutS (871 aa).

621–628 (GPNMAGKS) lines the ATP pocket.

Belongs to the DNA mismatch repair MutS family.

Its function is as follows. This protein is involved in the repair of mismatches in DNA. It is possible that it carries out the mismatch recognition step. This protein has a weak ATPase activity. This Geobacter sulfurreducens (strain ATCC 51573 / DSM 12127 / PCA) protein is DNA mismatch repair protein MutS.